A 185-amino-acid chain; its full sequence is ATP synthase subunit delta (185 aa).

Belongs to the ATPase delta chain family. In terms of assembly, F-type ATPases have 2 components, F(1) - the catalytic core - and F(0) - the membrane proton channel. F(1) has five subunits: alpha(3), beta(3), gamma(1), delta(1), epsilon(1). F(0) has three main subunits: a(1), b(2) and c(10-14). The alpha and beta chains form an alternating ring which encloses part of the gamma chain. F(1) is attached to F(0) by a central stalk formed by the gamma and epsilon chains, while a peripheral stalk is formed by the delta and b chains.

Its subcellular location is the cell inner membrane. Functionally, f(1)F(0) ATP synthase produces ATP from ADP in the presence of a proton or sodium gradient. F-type ATPases consist of two structural domains, F(1) containing the extramembraneous catalytic core and F(0) containing the membrane proton channel, linked together by a central stalk and a peripheral stalk. During catalysis, ATP synthesis in the catalytic domain of F(1) is coupled via a rotary mechanism of the central stalk subunits to proton translocation. This protein is part of the stalk that links CF(0) to CF(1). It either transmits conformational changes from CF(0) to CF(1) or is implicated in proton conduction. This chain is ATP synthase subunit delta, found in Phocaeicola vulgatus (strain ATCC 8482 / DSM 1447 / JCM 5826 / CCUG 4940 / NBRC 14291 / NCTC 11154) (Bacteroides vulgatus).